The sequence spans 273 residues: Dermonecrotic toxin LapSicTox-alphaIB1aii (273 aa).

His5 is a catalytic residue. Mg(2+) contacts are provided by Glu25 and Asp27. His41 functions as the Nucleophile in the catalytic mechanism. Cystine bridges form between Cys45–Cys51 and Cys47–Cys190. Position 85 (Asp85) interacts with Mg(2+). A glycan (N-linked (GlcNAc...) asparagine) is linked at Asn250.

The protein belongs to the arthropod phospholipase D family. Class II subfamily. Requires Mg(2+) as cofactor. In terms of tissue distribution, expressed by the venom gland.

It localises to the secreted. The catalysed reaction is an N-(acyl)-sphingosylphosphocholine = an N-(acyl)-sphingosyl-1,3-cyclic phosphate + choline. It carries out the reaction an N-(acyl)-sphingosylphosphoethanolamine = an N-(acyl)-sphingosyl-1,3-cyclic phosphate + ethanolamine. The enzyme catalyses a 1-acyl-sn-glycero-3-phosphocholine = a 1-acyl-sn-glycero-2,3-cyclic phosphate + choline. It catalyses the reaction a 1-acyl-sn-glycero-3-phosphoethanolamine = a 1-acyl-sn-glycero-2,3-cyclic phosphate + ethanolamine. Functionally, dermonecrotic toxins cleave the phosphodiester linkage between the phosphate and headgroup of certain phospholipids (sphingolipid and lysolipid substrates), forming an alcohol (often choline) and a cyclic phosphate. This toxin acts on sphingomyelin (SM). It may also act on ceramide phosphoethanolamine (CPE), lysophosphatidylcholine (LPC) and lysophosphatidylethanolamine (LPE), but not on lysophosphatidylserine (LPS), and lysophosphatidylglycerol (LPG). It acts by transphosphatidylation, releasing exclusively cyclic phosphate products as second products. Induces dermonecrosis, hemolysis, increased vascular permeability, edema, inflammatory response, and platelet aggregation. This is Dermonecrotic toxin LapSicTox-alphaIB1aii from Loxosceles apachea (Apache recluse spider).